Reading from the N-terminus, the 41-residue chain is Photosystem I reaction center subunit IX (41 aa).

A helical transmembrane segment spans residues 7–29 (YLSTAPVLLTVWLSITASGIMII).

The protein belongs to the PsaJ family.

Its subcellular location is the plastid. It localises to the chloroplast thylakoid membrane. In terms of biological role, may help in the organization of the PsaE and PsaF subunits. This is Photosystem I reaction center subunit IX from Heterosigma akashiwo (strain NIES-293 / 8280G21-1).